The chain runs to 305 residues: Guanine nucleotide-binding protein subunit beta (305 aa).

7 WD repeats span residues 19–49 (NKLG…LVWD), 61–91 (APSV…VVYD), 104–133 (GHAG…MFWD), 145–176 (GHEM…KLWD), 188–218 (GNTS…RCFD), 231–260 (PSSS…EVWD), and 272–302 (GHEN…RLWS).

Belongs to the WD repeat G protein beta family. In terms of assembly, g proteins are composed of 3 units, alpha, beta and gamma. Binding of the beta-gamma subunit complex (git5-git11) to the alpha subunit (gpa2) facilitates interaction with GPCR git3.

Its subcellular location is the cell membrane. It is found in the cytoplasm. The protein localises to the nucleus. Beta subunit of the heterotrimeric guanine nucleotide-binding protein (G protein) involved in glucose-induced cAMP signaling. The beta-gamma subunits (git5-git11) promote binding of the alpha subunit gpa2 to GPCR git3, which senses extracellular glucose, to activate cAMP-PKA signaling and repress sexual development and gluconeogenesis. In Schizosaccharomyces pombe (strain 972 / ATCC 24843) (Fission yeast), this protein is Guanine nucleotide-binding protein subunit beta (git5).